The following is a 354-amino-acid chain: Serum paraoxonase/lactonase 3 (354 aa).

N-linked (GlcNAc...) asparagine glycosylation occurs at Asn-29. Cysteines 42 and 352 form a disulfide. Ca(2+) is bound by residues Glu-53 and Asp-54. The Proton acceptor role is filled by His-114. Ile-116 serves as a coordination point for Ca(2+). At Ser-165 the chain carries Phosphoserine. Asn-167, Asp-168, Asn-223, Asp-268, and Asn-269 together coordinate Ca(2+). N-linked (GlcNAc...) asparagine glycans are attached at residues Asn-269 and Asn-323.

This sequence belongs to the paraoxonase family. Homodimer. Ca(2+) serves as cofactor. The signal sequence is not cleaved.

It localises to the secreted. Its subcellular location is the extracellular space. It catalyses the reaction a phenyl acetate + H2O = a phenol + acetate + H(+). The enzyme catalyses An aryl dialkyl phosphate + H2O = dialkyl phosphate + an aryl alcohol.. The catalysed reaction is an N-acyl-L-homoserine lactone + H2O = an N-acyl-L-homoserine + H(+). In terms of biological role, has low activity towards the organophosphate paraxon and aromatic carboxylic acid esters. Rapidly hydrolyzes lactones such as statin prodrugs (e.g. lovastatin). Hydrolyzes aromatic lactones and 5- or 6-member ring lactones with aliphatic substituents but not simple lactones or those with polar substituents. The chain is Serum paraoxonase/lactonase 3 (PON3) from Homo sapiens (Human).